Here is a 336-residue protein sequence, read N- to C-terminus: Fructose-1,6-bisphosphatase class 1 (336 aa).

The Mg(2+) site is built by glutamate 90, aspartate 112, leucine 114, and aspartate 115. Substrate is bound by residues 115-118, asparagine 211, and lysine 277; that span reads DGSS. Glutamate 283 serves as a coordination point for Mg(2+).

Belongs to the FBPase class 1 family. In terms of assembly, homotetramer. Mg(2+) serves as cofactor.

It is found in the cytoplasm. The enzyme catalyses beta-D-fructose 1,6-bisphosphate + H2O = beta-D-fructose 6-phosphate + phosphate. Its pathway is carbohydrate biosynthesis; gluconeogenesis. The protein is Fructose-1,6-bisphosphatase class 1 of Pseudomonas savastanoi pv. phaseolicola (strain 1448A / Race 6) (Pseudomonas syringae pv. phaseolicola (strain 1448A / Race 6)).